The following is a 254-amino-acid chain: Imidazole glycerol phosphate synthase subunit HisF (254 aa).

Catalysis depends on residues aspartate 11 and aspartate 130.

This sequence belongs to the HisA/HisF family. Heterodimer of HisH and HisF.

It is found in the cytoplasm. It catalyses the reaction 5-[(5-phospho-1-deoxy-D-ribulos-1-ylimino)methylamino]-1-(5-phospho-beta-D-ribosyl)imidazole-4-carboxamide + L-glutamine = D-erythro-1-(imidazol-4-yl)glycerol 3-phosphate + 5-amino-1-(5-phospho-beta-D-ribosyl)imidazole-4-carboxamide + L-glutamate + H(+). It functions in the pathway amino-acid biosynthesis; L-histidine biosynthesis; L-histidine from 5-phospho-alpha-D-ribose 1-diphosphate: step 5/9. Functionally, IGPS catalyzes the conversion of PRFAR and glutamine to IGP, AICAR and glutamate. The HisF subunit catalyzes the cyclization activity that produces IGP and AICAR from PRFAR using the ammonia provided by the HisH subunit. The chain is Imidazole glycerol phosphate synthase subunit HisF from Trichlorobacter lovleyi (strain ATCC BAA-1151 / DSM 17278 / SZ) (Geobacter lovleyi).